The primary structure comprises 472 residues: 7-dimethylallyltryptophan synthase hasE (472 aa).

E138 is an L-tryptophan binding site. Positions 154, 239, 241, 313, 315, 393, 460, and 464 each coordinate dimethylallyl diphosphate.

Belongs to the tryptophan dimethylallyltransferase family. Homodimer.

The catalysed reaction is L-tryptophan + dimethylallyl diphosphate = 7-(3-methylbut-2-enyl)-L-tryptophan + diphosphate. It carries out the reaction an N-terminal L-tryptophanyl-L-alpha-aminoacyl-[peptide] + H2O = an N-terminal L-alpha-aminoacyl-[peptide] + L-tryptophan. The protein operates within secondary metabolite biosynthesis. Functionally, 7-dimethylallyltryptophan synthase; part of the gene cluster that mediates the biosynthesis of hexadehydro-astechrome (HAS), a tryptophan-derived iron(III)-complex that acts as a virulence factor in infected mice. Catalyzes the prenylation of L-tryptophan at the C-7 position of the indole moiety. The enzyme is specific for dimethylallyl diphosphate (DMAPP) as prenyl donor. Also accepts D-tryptophan, typtophan-derivatives with modifications at the side chain or the indole ring, and linear and cyclic dipeptides such as H-L-Trp-L-Gly-OH or cyclo-L-Trp-L-Gly as substrates, however with lower efficiency. Also has tryptophan aminopeptidase activity towards linear peptides with a tryptophanyl moiety at the N-terminus. Dipeptides are better substrates than peptides with 3 or more amino acids. Enzymatic rate constants however are much higher for the prenyltransferase activity than for the aminopeptidase activity. Within the hexadehydro-astechrome biosyntetic pathway, hasE catalyzes the prenylation of the hasD-tethered tryptophan or the resulting tethered Trp-Ala dipeptid. The HAS biosynthesis begins with the synthesis of a tethered Trp-Ala dipeptide by the NRPS hasD. The 7-dimethylallyltryptophan synthase hasE then catalyzes the prenylation of the hasD-tethered tryptophan or the resulting tethered Trp-Ala dipeptide at the C-7 position of the indole moiety. HAS biosynthesis continues via tethered intermediates with the succesive actions of the cytochrome P450 monooxygenase hasH, the O-methyltransferase hasC, and the FAD-linked oxidoreductase hasG. The resulting O-methylated diketopiperazine is then released from hasD. Finally, three O-methylated diketopiperazine molecules assemble in a trimeric complex with Fe(III) to produce hexadehydro-astechrome. The protein is 7-dimethylallyltryptophan synthase hasE of Aspergillus fumigatus (strain CBS 144.89 / FGSC A1163 / CEA10) (Neosartorya fumigata).